Consider the following 214-residue polypeptide: Probable transaldolase (214 aa).

K83 (schiff-base intermediate with substrate) is an active-site residue.

This sequence belongs to the transaldolase family. Type 3B subfamily.

The protein resides in the cytoplasm. It carries out the reaction D-sedoheptulose 7-phosphate + D-glyceraldehyde 3-phosphate = D-erythrose 4-phosphate + beta-D-fructose 6-phosphate. The protein operates within carbohydrate degradation; pentose phosphate pathway; D-glyceraldehyde 3-phosphate and beta-D-fructose 6-phosphate from D-ribose 5-phosphate and D-xylulose 5-phosphate (non-oxidative stage): step 2/3. Functionally, transaldolase is important for the balance of metabolites in the pentose-phosphate pathway. This Streptococcus pyogenes serotype M1 protein is Probable transaldolase (tal).